The following is a 299-amino-acid chain: ATP phosphoribosyltransferase (299 aa).

Belongs to the ATP phosphoribosyltransferase family. Long subfamily. Equilibrium between an active dimeric form, an inactive hexameric form and higher aggregates. Interconversion between the various forms is largely reversible and is influenced by the natural substrates and inhibitors of the enzyme. Mg(2+) is required as a cofactor.

It is found in the cytoplasm. It catalyses the reaction 1-(5-phospho-beta-D-ribosyl)-ATP + diphosphate = 5-phospho-alpha-D-ribose 1-diphosphate + ATP. Its pathway is amino-acid biosynthesis; L-histidine biosynthesis; L-histidine from 5-phospho-alpha-D-ribose 1-diphosphate: step 1/9. With respect to regulation, feedback inhibited by histidine. Its function is as follows. Catalyzes the condensation of ATP and 5-phosphoribose 1-diphosphate to form N'-(5'-phosphoribosyl)-ATP (PR-ATP). Has a crucial role in the pathway because the rate of histidine biosynthesis seems to be controlled primarily by regulation of HisG enzymatic activity. The chain is ATP phosphoribosyltransferase from Buchnera aphidicola subsp. Melaphis rhois.